Here is a 92-residue protein sequence, read N- to C-terminus: Small ribosomal subunit protein uS19 (92 aa).

Belongs to the universal ribosomal protein uS19 family.

In terms of biological role, protein S19 forms a complex with S13 that binds strongly to the 16S ribosomal RNA. The chain is Small ribosomal subunit protein uS19 from Prochlorococcus marinus (strain MIT 9301).